A 753-amino-acid chain; its full sequence is Serine/threonine-protein phosphatase with EF-hands 2 (753 aa).

In terms of domain architecture, IQ spans 21–46; the sequence is KAAALIQRWYRRYVARLEMRRRCTWS. Residues 128-540 are catalytic; it reads ATALVEAFRL…PHIVQYQANK (413 aa). Residues aspartate 179, histidine 181, aspartate 208, and asparagine 240 each contribute to the Mn(2+) site. The active-site Proton donor is the histidine 241. Position 292 (histidine 292) interacts with Mn(2+). Disordered stretches follow at residues 318–382 and 409–435; these read CKTR…GSLD and VTGE…KPTQ. Basic and acidic residues predominate over residues 322-333; sequence QKSEKQMEEKRR. The segment covering 348-361 has biased composition (low complexity); the sequence is LPESRSLPSSPLRL. Positions 366–377 are enriched in polar residues; sequence AQKTSRSSSIPC. Histidine 488 is a Mn(2+) binding site. EF-hand domains are found at residues 568–603, 652–687, and 692–727; these read AHSS…VLHL, RNRS…FSSH, and ITDD…VEKS. Positions 665, 667, 669, 676, 705, 707, 709, 711, and 716 each coordinate Ca(2+). Residues 732-753 form a disordered region; the sequence is DASECPQATNAKDSGCSSPGAH. Residues 737–753 are compositionally biased toward polar residues; that stretch reads PQATNAKDSGCSSPGAH.

Belongs to the PPP phosphatase family. Mn(2+) serves as cofactor. In terms of tissue distribution, retinal specific.

Its subcellular location is the cytoplasm. It is found in the cell projection. It localises to the cilium. The protein resides in the photoreceptor outer segment. The protein localises to the photoreceptor inner segment. The catalysed reaction is O-phospho-L-seryl-[protein] + H2O = L-seryl-[protein] + phosphate. It catalyses the reaction O-phospho-L-threonyl-[protein] + H2O = L-threonyl-[protein] + phosphate. Its activity is regulated as follows. Activated by calcium. In terms of biological role, may play a role in phototransduction. May dephosphorylate photoactivated rhodopsin. May function as a calcium sensing regulator of ionic currents, energy production or synaptic transmission. In Homo sapiens (Human), this protein is Serine/threonine-protein phosphatase with EF-hands 2 (PPEF2).